We begin with the raw amino-acid sequence, 955 residues long: Calsyntenin-2 (955 aa).

An N-terminal signal peptide occupies residues 1–20 (MLPGRLCWVPLLLALGVGSG). The Extracellular segment spans residues 21-831 (SGGGGDSRQR…SIQHSSVVPS (811 aa)). Cadherin domains lie at 44 to 160 (IETS…APTF) and 161 to 280 (KEPA…MPLF). Residues Asn-56 and Asn-98 are each glycosylated (N-linked (GlcNAc...) asparagine). Asn-342, Asn-374, Asn-716, and Asn-729 each carry an N-linked (GlcNAc...) asparagine glycan. The chain crosses the membrane as a helical span at residues 832–852 (IATVVIIISVCMLVFVVAMGV). Residues 853–955 (YRVRIAHQHF…LEWDDSTLPY (103 aa)) are Cytoplasmic-facing. Residues 887-955 (PMEKHEGPGH…LEWDDSTLPY (69 aa)) are disordered. A compositionally biased stretch (basic and acidic residues) spans 888-898 (MEKHEGPGHGE). 2 stretches are compositionally biased toward acidic residues: residues 899-913 (DETE…EEEM) and 920-929 (DDSEEEEEEE).

It belongs to the calsyntenin family. Proteolytically processed under normal cellular conditions. A primary zeta-cleavage generates a large extracellular (soluble) N-terminal domain (sAlc) and a short C-terminal transmembrane fragment (CTF1). A secondary cleavage catalyzed by gamma-secretase within the transmembrane domain releases the beta-Alc-gamma chain in the extracellular milieu and produces an intracellular fragment (AlcICD). This processing is strongly suppressed in the tripartite complex formed with APBA2 and APP, which seems to prevent the association with PSEN1. As to expression, restricted to the brain.

Its subcellular location is the postsynaptic cell membrane. It localises to the endoplasmic reticulum membrane. It is found in the golgi apparatus membrane. The protein localises to the cell projection. The protein resides in the dendrite. In terms of biological role, postsynaptic adhesion molecule that binds to presynaptic neurexins to mediate synapse formation, and which is involved in learning and memory. Promotes synapse development by acting as a cell adhesion molecule at the postsynaptic membrane, which associates with neurexin-alpha at the presynaptic membrane. In Homo sapiens (Human), this protein is Calsyntenin-2.